We begin with the raw amino-acid sequence, 461 residues long: PTS system sucrose-specific EIIBC component (461 aa).

In terms of domain architecture, PTS EIIB type-1 spans 4 to 87; it reads KETAKRLIEL…SKEADIEREE (84 aa). Residue Cys-26 is the Phosphocysteine intermediate; for EIIB activity of the active site. Positions 107–461 constitute a PTS EIIC type-1 domain; sequence KTLSNIFVPI…KINEDEERKK (355 aa). The next 10 helical transmembrane spans lie at 112–132, 148–168, 178–198, 208–228, 248–268, 289–309, 329–349, 359–379, 387–407, and 430–450; these read IFVP…LLGM, LLDM…GVSA, LGAV…WGLA, FGFD…LLAV, LLVT…IAIG, AGFV…LTGV, LLPI…AVFF, IALP…IFGV, FIAA…THVA, and LIHY…AAFV.

Its subcellular location is the cell membrane. It carries out the reaction N(pros)-phospho-L-histidyl-[protein](out) + sucrose = sucrose 6(G)-phosphate(in) + L-histidyl-[protein]. Functionally, the phosphoenolpyruvate-dependent sugar phosphotransferase system (sugar PTS), a major carbohydrate active transport system, catalyzes the phosphorylation of incoming sugar substrates concomitantly with their translocation across the cell membrane. This system is involved in sucrose transport. The sequence is that of PTS system sucrose-specific EIIBC component (sacP) from Bacillus subtilis (strain 168).